Here is a 393-residue protein sequence, read N- to C-terminus: Lipid-A-disaccharide synthase (393 aa).

The protein belongs to the LpxB family.

It carries out the reaction a lipid X + a UDP-2-N,3-O-bis[(3R)-3-hydroxyacyl]-alpha-D-glucosamine = a lipid A disaccharide + UDP + H(+). Its pathway is bacterial outer membrane biogenesis; LPS lipid A biosynthesis. In terms of biological role, condensation of UDP-2,3-diacylglucosamine and 2,3-diacylglucosamine-1-phosphate to form lipid A disaccharide, a precursor of lipid A, a phosphorylated glycolipid that anchors the lipopolysaccharide to the outer membrane of the cell. The sequence is that of Lipid-A-disaccharide synthase from Rhodopseudomonas palustris (strain HaA2).